The chain runs to 430 residues: Histidine--tRNA ligase (430 aa).

This sequence belongs to the class-II aminoacyl-tRNA synthetase family. Homodimer.

Its subcellular location is the cytoplasm. The enzyme catalyses tRNA(His) + L-histidine + ATP = L-histidyl-tRNA(His) + AMP + diphosphate + H(+). The chain is Histidine--tRNA ligase from Acinetobacter baumannii (strain ATCC 17978 / DSM 105126 / CIP 53.77 / LMG 1025 / NCDC KC755 / 5377).